Here is a 1009-residue protein sequence, read N- to C-terminus: Type VII secretion system accessory factor EsaA (1009 aa).

The next 6 helical transmembrane spans lie at I7–V27, I822–F842, V869–I889, K903–L923, S928–L948, and I979–F999.

Belongs to the EsaA family. In terms of assembly, homodimer. Interacts with EssB.

Its subcellular location is the cell membrane. In terms of biological role, component of the type VII secretion system (Ess). Provides together with EssB and other components such as EssC and EssE a secretion platform across the cytoplasmic membrane in the host. The chain is Type VII secretion system accessory factor EsaA from Staphylococcus aureus (strain Mu50 / ATCC 700699).